The chain runs to 264 residues: Transmembrane protein 41A (264 aa).

The N-terminal stretch at 1–17 (MRALLGLLLVFGGCTFA) is a signal peptide. Helical transmembrane passes span 67–87 (AYVF…AIPG), 100–122 (GPWL…CYLL), 153–173 (LFFF…FLNL), 175–195 (APIL…GLIP), and 219–239 (WETV…GTLI). The segment at 96 to 207 (GALFGPWLGL…FICVQTGSIL (112 aa)) is VTT domain.

The protein belongs to the TMEM41 family.

It localises to the membrane. The chain is Transmembrane protein 41A (Tmem41a) from Mus musculus (Mouse).